The primary structure comprises 303 residues: Lipoyl synthase (303 aa).

[4Fe-4S] cluster contacts are provided by cysteine 34, cysteine 39, cysteine 45, cysteine 60, cysteine 64, cysteine 67, and serine 273. The Radical SAM core domain occupies 46–262 (WSKKHATVMI…ERVARTKGFL (217 aa)).

This sequence belongs to the radical SAM superfamily. Lipoyl synthase family. The cofactor is [4Fe-4S] cluster.

Its subcellular location is the cytoplasm. It catalyses the reaction [[Fe-S] cluster scaffold protein carrying a second [4Fe-4S](2+) cluster] + N(6)-octanoyl-L-lysyl-[protein] + 2 oxidized [2Fe-2S]-[ferredoxin] + 2 S-adenosyl-L-methionine + 4 H(+) = [[Fe-S] cluster scaffold protein] + N(6)-[(R)-dihydrolipoyl]-L-lysyl-[protein] + 4 Fe(3+) + 2 hydrogen sulfide + 2 5'-deoxyadenosine + 2 L-methionine + 2 reduced [2Fe-2S]-[ferredoxin]. Its pathway is protein modification; protein lipoylation via endogenous pathway; protein N(6)-(lipoyl)lysine from octanoyl-[acyl-carrier-protein]: step 2/2. Functionally, catalyzes the radical-mediated insertion of two sulfur atoms into the C-6 and C-8 positions of the octanoyl moiety bound to the lipoyl domains of lipoate-dependent enzymes, thereby converting the octanoylated domains into lipoylated derivatives. The protein is Lipoyl synthase of Rickettsia bellii (strain OSU 85-389).